Reading from the N-terminus, the 737-residue chain is Dipeptidyl peptidase 3 (737 aa).

The residue at position 2 (A2) is an N-acetylalanine. H450 serves as a coordination point for Zn(2+). Residue E451 is part of the active site. Zn(2+)-binding residues include H455 and E508.

This sequence belongs to the peptidase M49 family. Zn(2+) serves as cofactor. Detected in placenta (at protein level). Detected in erythrocytes (at protein level).

It localises to the cytoplasm. The protein resides in the cytosol. It carries out the reaction Release of an N-terminal dipeptide from a peptide comprising four or more residues, with broad specificity. Also acts on dipeptidyl 2-naphthylamides.. With respect to regulation, activated by Co(2+). Inhibited by EDTA and o-phenanthroline (in vitro). Cleaves and degrades bioactive peptides, including angiotensin, Leu-enkephalin and Met-enkephalin. Also cleaves Arg-Arg-beta-naphthylamide (in vitro). The sequence is that of Dipeptidyl peptidase 3 (DPP3) from Homo sapiens (Human).